A 1512-amino-acid chain; its full sequence is Bifunctional glutamate/proline--tRNA ligase (1512 aa).

The segment at 164 to 759 (GTKWDVSGNR…SSVLYSRVAV (596 aa)) is glutamate--tRNA ligase. The 'HIGH' region motif lies at 204-214 (PEASGYLHIGH). The segment at 294-315 (TPAEQMKAEREQRTESKHRKNS) is disordered. Residues 299–308 (MKAEREQRTE) are compositionally biased toward basic and acidic residues. An N6-acetyllysine; alternate modification is found at lysine 300. Residue lysine 300 is modified to N6-malonyllysine; alternate. Phosphothreonine is present on threonine 355. An N6-acetyllysine modification is found at lysine 417. A 'KMSKS' region motif is present at residues 432-436 (VLSKR). Serine 434 is modified (phosphoserine). An N6-acetyllysine mark is found at lysine 498, lysine 535, lysine 542, and lysine 637. Over residues 709-736 (EMPTSGSKEKTKVEISKKETSSAPKERP) the composition is skewed to basic and acidic residues. A disordered region spans residues 709–742 (EMPTSGSKEKTKVEISKKETSSAPKERPAPAVSS). A WHEP-TRS 1 domain is found at 749–805 (DSSVLYSRVAVQGDVVRELKAKKAPKEDIDAAVKQLLTLKAEYKEKTGQEYKPGNPS). Positions 760–956 (QGDVVRELKA…GIEYKPVSAT (197 aa)) are 3 X 57 AA approximate repeats. The residue at position 788 (lysine 788) is an N6-acetyllysine. Residues 795–819 (TGQEYKPGNPSAAAVQTVSTKSSSN) form a disordered region. Polar residues predominate over residues 808–819 (AVQTVSTKSSSN). One can recognise a WHEP-TRS 2 domain in the interval 822–878 (ESTSLYNKVAAQGEVVRKLKAEKAPKAKVTEAVECLLSLKAEYKEKTGKDYVPGQPP). Lysine 861 bears the N6-acetyllysine mark. Disordered stretches follow at residues 869–898 (GKDY…GAEK) and 956–1011 (TGAE…PKKQ). Tyrosine 872 carries the phosphotyrosine modification. The span at 878 to 892 (PASQNSHSNPVSNAQ) shows a compositional bias: polar residues. Position 885 is a phosphoserine (serine 885). Residues 900–956 (EAKVLFDRVACQGEVVRKLKAEKASKDQVDSAVQELLQLKAQYKSLTGIEYKPVSAT) form the WHEP-TRS 3 domain. Residues 958–976 (AEDKDKKKKEKENKSEKQN) show a composition bias toward basic and acidic residues. The segment covering 997–1006 (LSSGGAGEGQ) has biased composition (gly residues). Serine 998 carries the post-translational modification Phosphoserine. At serine 999 the chain carries Phosphoserine; by RPS6KB1. Residues 1007-1512 (GPKKQTRLGL…KFYTLFGRSY (506 aa)) form a proline--tRNA ligase region. Residues 1121–1123 (TSE) and arginine 1152 contribute to the L-proline site. The ATP site is built by arginine 1152, glutamate 1154, arginine 1163, threonine 1164, glutamine 1237, and threonine 1240. Omega-N-methylarginine is present on arginine 1152. Glutamine 1237 contributes to the Mg(2+) binding site. Histidine 1242 is an L-proline binding site. ATP is bound by residues threonine 1276 and arginine 1278. Serine 1350 is modified (phosphoserine). The Zn(2+) site is built by cysteine 1448, cysteine 1453, cysteine 1495, and cysteine 1497. Lysine 1503 carries the N6-acetyllysine modification.

The protein in the N-terminal section; belongs to the class-I aminoacyl-tRNA synthetase family. Glutamate--tRNA ligase type 2 subfamily. In the C-terminal section; belongs to the class-II aminoacyl-tRNA synthetase family. As to quaternary structure, homodimer. Part of the aminoacyl-tRNA synthetase multienzyme complex, also know as multisynthetase complex, that is composed of the tRNA ligases for Arg (RARS1), Asp (DARS1), Gln (QARS1), Ile (IARS1), Leu (LARS1), Lys (KARS1), Met (MARS1) the bifunctional ligase for Glu and Pro (EPRS1) and the auxiliary subunits AIMP1/p43, AIMP2/p38 and EEF1E1/p18. Forms a linear complex that contains MARS1, EEF1E1, EPRS1 and AIMP2 that is at the core of the multisubunit complex. Interacts with TARS3. Interacts with DUS2L. Component of the GAIT complex which is composed of EPRS1, RPL13A and GAPDH. Interacts (phosphorylated at Ser-999) with SLC27A1; mediates the translocation of SLC27A1 from the cytoplasm to the plasma membrane thereby increasing the uptake of long-chain fatty acids. Phosphorylated at Ser-999 by RPS6KB1; triggers EPRS1 release from the aminoacyl-tRNA synthetase multienzyme complex. In monocytes, the IFN-gamma-induced phosphorylation at Ser-999 releases EPRS1 from the aminoacyl-tRNA synthetase multienzyme complex, allowing its association with the GAIT complex. Phosphorylation at Ser-999 is specifically required for the RPL13A-mediated interaction of the GAIT complex with eIF4G. Phosphorylation at Ser-999 by RPS6KB1, is also induced by insulin through activation of the mTORC1 signaling pathway and promotes the interaction of EPRS1 with SLC27A1.

The protein localises to the cytoplasm. Its subcellular location is the cytosol. The protein resides in the membrane. The catalysed reaction is tRNA(Glu) + L-glutamate + ATP = L-glutamyl-tRNA(Glu) + AMP + diphosphate. It carries out the reaction tRNA(Pro) + L-proline + ATP = L-prolyl-tRNA(Pro) + AMP + diphosphate. Multifunctional protein which primarily functions within the aminoacyl-tRNA synthetase multienzyme complex, also known as multisynthetase complex. Within the complex it catalyzes the attachment of both L-glutamate and L-proline to their cognate tRNAs in a two-step reaction where the amino acid is first activated by ATP to form a covalent intermediate with AMP. Subsequently, the activated amino acid is transferred to the acceptor end of the cognate tRNA to form L-glutamyl-tRNA(Glu) and L-prolyl-tRNA(Pro). Upon interferon-gamma stimulation, EPRS1 undergoes phosphorylation, causing its dissociation from the aminoacyl-tRNA synthetase multienzyme complex. It is recruited to form the GAIT complex, which binds to stem loop-containing GAIT elements found in the 3'-UTR of various inflammatory mRNAs, such as ceruloplasmin. The GAIT complex inhibits the translation of these mRNAs, allowing interferon-gamma to redirect the function of EPRS1 from protein synthesis to translation inhibition in specific cell contexts. Furthermore, it can function as a downstream effector in the mTORC1 signaling pathway, by promoting the translocation of SLC27A1 from the cytoplasm to the plasma membrane where it mediates the uptake of long-chain fatty acid by adipocytes. Thereby, EPRS1 also plays a role in fat metabolism and more indirectly influences lifespan. The chain is Bifunctional glutamate/proline--tRNA ligase from Mus musculus (Mouse).